Reading from the N-terminus, the 329-residue chain is Malate dehydrogenase (329 aa).

Residue 12–18 (GAAGQIG) participates in NAD(+) binding. Positions 95 and 101 each coordinate substrate. NAD(+) is bound by residues asparagine 108, glutamine 115, and 132-134 (VGN). Substrate is bound by residues asparagine 134 and arginine 165. The active-site Proton acceptor is the histidine 190.

Belongs to the LDH/MDH superfamily. MDH type 2 family.

It catalyses the reaction (S)-malate + NAD(+) = oxaloacetate + NADH + H(+). Its function is as follows. Catalyzes the reversible oxidation of malate to oxaloacetate. The protein is Malate dehydrogenase of Janthinobacterium sp. (strain Marseille) (Minibacterium massiliensis).